Here is a 212-residue protein sequence, read N- to C-terminus: 3-isopropylmalate dehydratase small subunit (212 aa).

This sequence belongs to the LeuD family. LeuD type 1 subfamily. Heterodimer of LeuC and LeuD.

It carries out the reaction (2R,3S)-3-isopropylmalate = (2S)-2-isopropylmalate. It participates in amino-acid biosynthesis; L-leucine biosynthesis; L-leucine from 3-methyl-2-oxobutanoate: step 2/4. Functionally, catalyzes the isomerization between 2-isopropylmalate and 3-isopropylmalate, via the formation of 2-isopropylmaleate. The sequence is that of 3-isopropylmalate dehydratase small subunit from Pseudomonas aeruginosa (strain LESB58).